The sequence spans 915 residues: DNA (cytosine-5)-methyltransferase 2 (915 aa).

Residues 1–14 are compositionally biased toward low complexity; the sequence is MAPSSPSSARPTRA. Residues 1 to 171 form a disordered region; sequence MAPSSPSSAR…STAANKPEED (171 aa). Residues 15-30 show a composition bias toward basic and acidic residues; the sequence is SGRERSAMAEEIHQNQ. Residues 42–57 are compositionally biased toward basic residues; sequence AKRRRKAASSGKKPKP. The span at 71–80 shows a compositional bias: basic and acidic residues; the sequence is KKGETEKTEP. The segment covering 81-108 has biased composition (acidic residues); the sequence is VVDDVCAEEPDEEELAMGEEEAEAEEQA. Low complexity predominate over residues 109-119; the sequence is MQEVVAAVAAG. A BAH domain is found at 188-313; it reads IVYCLGDDVY…VAYSTFANIS (126 aa). A compositionally biased stretch (polar residues) spans 315–328; that stretch reads ENGQSGSETASGIS. Positions 315-338 are disordered; that stretch reads ENGQSGSETASGISSDDAGLETSS. One can recognise an SAM-dependent MTase C5-type domain in the interval 345 to 876; the sequence is ATLLDLYSGC…YCLGQAYLGE (532 aa). The Chromo domain occupies 445 to 508; sequence FVVQKLIGIR…EGRKRKILPL (64 aa). Cys-521 is a catalytic residue.

This sequence belongs to the class I-like SAM-binding methyltransferase superfamily. C5-methyltransferase family.

The protein resides in the nucleus. The catalysed reaction is a 2'-deoxycytidine in DNA + S-adenosyl-L-methionine = a 5-methyl-2'-deoxycytidine in DNA + S-adenosyl-L-homocysteine + H(+). In terms of biological role, may be involved in the CpXpG methylation and in gene silencing. This chain is DNA (cytosine-5)-methyltransferase 2 (ZMET5), found in Zea mays (Maize).